The chain runs to 138 residues: MSAEQQPQQQQKLRWGIAWIYSSSNNTIITITDLTGAETVARVSGGQVVRADKDKPSPWAAMQAAYKAAQLAMARGINAVHIKVRGPGGYGMKVPGPGASAAIRALARSGLVIGRIEDVTPIPHDIIRPPSGRKGRRV.

This sequence belongs to the universal ribosomal protein uS11 family. Part of the 30S ribosomal subunit.

Its function is as follows. Located on the platform of the 30S subunit. The protein is Small ribosomal subunit protein uS11 of Pyrobaculum arsenaticum (strain DSM 13514 / JCM 11321 / PZ6).